The following is a 205-amino-acid chain: MNSNSFLISAALIFSLLSSNSPTSILAQINTPCSPSMLSSVTGCTSFLTGGGSFPTSDCCGALKSLTGTGMDCLCLIVTAGVPISIPINRTLAISLPRACGIPGVPVQCKASAAPLPTPGPASFGPTTSPTDSQTSDPEGSASFRPPTSPTTSQTPNDKDLSGSGNGGDPMGFAPPPPSSSPSSSHSLKLSYLLFAFAFTIIKFI.

Residues Met1–Ala27 form the signal peptide. 4 disulfides stabilise this stretch: Cys33–Cys75, Cys44–Cys59, Cys60–Cys100, and Cys73–Cys109. Asn89 carries an N-linked (GlcNAc...) asparagine glycan. Positions Leu116–Pro182 are disordered. Positions Pro126–Pro156 are enriched in low complexity. A lipid anchor (GPI-anchor amidated serine) is attached at Ser179. Residues Ser180–Ile205 constitute a propeptide, removed in mature form.

The protein belongs to the plant LTP family.

The protein resides in the cell membrane. In terms of biological role, probable lipid transfer protein. The chain is Non-specific lipid transfer protein GPI-anchored 21 from Arabidopsis thaliana (Mouse-ear cress).